We begin with the raw amino-acid sequence, 314 residues long: Cytochrome b558/566 subunit B (314 aa).

8 helical membrane passes run 47 to 67 (LLLV…LIVS), 76 to 96 (SLIP…IPNY), 102 to 122 (LYSL…EGLI), 127 to 147 (LSIL…ASIL), 155 to 175 (LFIS…AYVI), 186 to 206 (YIAI…ENII), 233 to 253 (HITL…TSLI), and 264 to 284 (FLII…IYML).

The protein localises to the cell membrane. The protein is Cytochrome b558/566 subunit B (cbsB) of Saccharolobus solfataricus (strain ATCC 35092 / DSM 1617 / JCM 11322 / P2) (Sulfolobus solfataricus).